The chain runs to 544 residues: ATP-dependent RNA helicase DBP9 (544 aa).

The Q motif motif lies at 9 to 37 (KSFDSFGLDDRLLSGLAACDMKQPTLIQN). Residues 41-214 (PLALDKGVDI…QQFCRSTVAS (174 aa)) enclose the Helicase ATP-binding domain. 54-61 (AVTGSGKT) contacts ATP. The DEAD box motif lies at 162 to 165 (DEAD). The Helicase C-terminal domain occupies 225-430 (KLLQYYVKCS…PYSFDMKQVE (206 aa)). Residues 525 to 544 (HKKYTKKKKGGDPLKFKKRK) are disordered. The span at 534–544 (GGDPLKFKKRK) shows a compositional bias: basic and acidic residues.

It belongs to the DEAD box helicase family. DDX56/DBP9 subfamily.

Its subcellular location is the nucleus. It localises to the nucleolus. It carries out the reaction ATP + H2O = ADP + phosphate + H(+). Its function is as follows. ATP-binding RNA helicase involved in the biogenesis of 60S ribosomal subunits and is required for the normal formation of 25S and 5.8S rRNAs. This is ATP-dependent RNA helicase DBP9 (DBP9) from Yarrowia lipolytica (strain CLIB 122 / E 150) (Yeast).